Here is a 474-residue protein sequence, read N- to C-terminus: tRNA modification GTPase MnmE (474 aa).

Residues Arg28, Glu92, and Arg131 each contribute to the (6S)-5-formyl-5,6,7,8-tetrahydrofolate site. Residues 227–395 form the TrmE-type G domain; that stretch reads GIPVAIVGTT…LKGELTQIME (169 aa). Asn237 contacts K(+). GTP is bound by residues 237 to 242, 256 to 262, 281 to 284, and 376 to 378; these read NVGKST, SDIHGTT, DTAG, and SAR. Ser241 serves as a coordination point for Mg(2+). Residues Ser256, Ile258, and Thr261 each coordinate K(+). Position 262 (Thr262) interacts with Mg(2+). Lys474 contacts (6S)-5-formyl-5,6,7,8-tetrahydrofolate.

The protein belongs to the TRAFAC class TrmE-Era-EngA-EngB-Septin-like GTPase superfamily. TrmE GTPase family. In terms of assembly, homodimer. Heterotetramer of two MnmE and two MnmG subunits. K(+) is required as a cofactor.

It localises to the cytoplasm. Exhibits a very high intrinsic GTPase hydrolysis rate. Involved in the addition of a carboxymethylaminomethyl (cmnm) group at the wobble position (U34) of certain tRNAs, forming tRNA-cmnm(5)s(2)U34. The chain is tRNA modification GTPase MnmE from Porphyromonas gingivalis (strain ATCC BAA-308 / W83).